The primary structure comprises 405 residues: Deoxyguanosinetriphosphate triphosphohydrolase-like protein (405 aa).

Residues 75–219 (RLTHTIEVAQ…AAIADDIAYN (145 aa)) enclose the HD domain.

This sequence belongs to the dGTPase family. Type 2 subfamily.

This chain is Deoxyguanosinetriphosphate triphosphohydrolase-like protein, found in Rhizobium meliloti (strain 1021) (Ensifer meliloti).